Consider the following 211-residue polypeptide: Large ribosomal subunit protein uL3 (211 aa).

A disordered region spans residues G116 to G142.

Belongs to the universal ribosomal protein uL3 family. Part of the 50S ribosomal subunit. Forms a cluster with proteins L14 and L19.

Its function is as follows. One of the primary rRNA binding proteins, it binds directly near the 3'-end of the 23S rRNA, where it nucleates assembly of the 50S subunit. This is Large ribosomal subunit protein uL3 from Fusobacterium nucleatum subsp. nucleatum (strain ATCC 25586 / DSM 15643 / BCRC 10681 / CIP 101130 / JCM 8532 / KCTC 2640 / LMG 13131 / VPI 4355).